Consider the following 348-residue polypeptide: Holliday junction branch migration complex subunit RuvB (348 aa).

A large ATPase domain (RuvB-L) region spans residues 1 to 181; that stretch reads MEERMITPQQ…FGVISRLEFY (181 aa). Residues Leu20, Arg21, Gly62, Lys65, Thr66, Thr67, Arg171, Tyr181, and Arg218 each contribute to the ATP site. Mg(2+) is bound at residue Thr66. A small ATPAse domain (RuvB-S) region spans residues 182–252; sequence EVEDLIRIIT…LAGKSLDRLE (71 aa). The head domain (RuvB-H) stretch occupies residues 255 to 348; the sequence is PAGLDRIDQK…GDSLFDAAED (94 aa). 2 residues coordinate DNA: Arg310 and Arg315. The interval 329–348 is disordered; sequence VNSSHQEGGQGDSLFDAAED.

It belongs to the RuvB family. As to quaternary structure, homohexamer. Forms an RuvA(8)-RuvB(12)-Holliday junction (HJ) complex. HJ DNA is sandwiched between 2 RuvA tetramers; dsDNA enters through RuvA and exits via RuvB. An RuvB hexamer assembles on each DNA strand where it exits the tetramer. Each RuvB hexamer is contacted by two RuvA subunits (via domain III) on 2 adjacent RuvB subunits; this complex drives branch migration. In the full resolvosome a probable DNA-RuvA(4)-RuvB(12)-RuvC(2) complex forms which resolves the HJ.

It is found in the cytoplasm. It carries out the reaction ATP + H2O = ADP + phosphate + H(+). Functionally, the RuvA-RuvB-RuvC complex processes Holliday junction (HJ) DNA during genetic recombination and DNA repair, while the RuvA-RuvB complex plays an important role in the rescue of blocked DNA replication forks via replication fork reversal (RFR). RuvA specifically binds to HJ cruciform DNA, conferring on it an open structure. The RuvB hexamer acts as an ATP-dependent pump, pulling dsDNA into and through the RuvAB complex. RuvB forms 2 homohexamers on either side of HJ DNA bound by 1 or 2 RuvA tetramers; 4 subunits per hexamer contact DNA at a time. Coordinated motions by a converter formed by DNA-disengaged RuvB subunits stimulates ATP hydrolysis and nucleotide exchange. Immobilization of the converter enables RuvB to convert the ATP-contained energy into a lever motion, pulling 2 nucleotides of DNA out of the RuvA tetramer per ATP hydrolyzed, thus driving DNA branch migration. The RuvB motors rotate together with the DNA substrate, which together with the progressing nucleotide cycle form the mechanistic basis for DNA recombination by continuous HJ branch migration. Branch migration allows RuvC to scan DNA until it finds its consensus sequence, where it cleaves and resolves cruciform DNA. This chain is Holliday junction branch migration complex subunit RuvB, found in Desulfitobacterium hafniense (strain DSM 10664 / DCB-2).